The primary structure comprises 263 residues: Tryptophan synthase alpha chain (263 aa).

Residues glutamate 47 and aspartate 58 each act as proton acceptor in the active site.

This sequence belongs to the TrpA family. As to quaternary structure, tetramer of two alpha and two beta chains.

Its subcellular location is the plastid. It localises to the chloroplast. The catalysed reaction is (1S,2R)-1-C-(indol-3-yl)glycerol 3-phosphate + L-serine = D-glyceraldehyde 3-phosphate + L-tryptophan + H2O. It participates in amino-acid biosynthesis; L-tryptophan biosynthesis; L-tryptophan from chorismate: step 5/5. Functionally, the alpha subunit is responsible for the aldol cleavage of indoleglycerol phosphate to indole and glyceraldehyde 3-phosphate. The protein is Tryptophan synthase alpha chain of Antithamnion sp. (Red alga).